The primary structure comprises 408 residues: Eukaryotic initiation factor 4A-II (408 aa).

The interval 1–22 (MSGGSADYNSREHGGPEGMDPD) is disordered. Positions 34 to 62 (DNFDDMNLKESLLRGIYAYGFEKPSAIQQ) match the Q motif motif. Positions 65–236 (IIPCIKGYDV…KKFMRDPIRI (172 aa)) constitute a Helicase ATP-binding domain. 77-84 (QAQSGTGK) is a binding site for ATP. The residue at position 160 (T160) is a Phosphothreonine. A DEAD box motif is present at residues 183–186 (LDEA). Residues 247–408 (GIKQFYINVE…EMPMNVADLI (162 aa)) form the Helicase C-terminal domain.

Belongs to the DEAD box helicase family. eIF4A subfamily. In terms of assembly, eIF4F is a multi-subunit complex, the composition of which varies with external and internal environmental conditions. It is composed of at least EIF4A, EIF4E and EIF4G1/EIFFG3. Interacts with EIF4E. May interact with NOM1.

It carries out the reaction ATP + H2O = ADP + phosphate + H(+). Its function is as follows. ATP-dependent RNA helicase which is a subunit of the eIF4F complex involved in cap recognition and is required for mRNA binding to ribosome. In the current model of translation initiation, eIF4A unwinds RNA secondary structures in the 5'-UTR of mRNAs which is necessary to allow efficient binding of the small ribosomal subunit, and subsequent scanning for the initiator codon. In Macaca fascicularis (Crab-eating macaque), this protein is Eukaryotic initiation factor 4A-II (EIF4A2).